Here is a 1127-residue protein sequence, read N- to C-terminus: Collagen alpha-2(I) chain (1127 aa).

Pro residues predominate over residues 1–16 (DGKPGLPGPAGPPGPP). The interval 1–1017 (DGKPGLPGPA…GPAGPAGGGY (1017 aa)) is disordered. Composition is skewed to low complexity over residues 171–191 (AGPA…AAGP), 221–230 (EPGPNGAVGP), and 237–258 (PGNN…AGAP). Over residues 260 to 270 (FPGPRGGPGPQ) the composition is skewed to pro residues. Positions 272–282 (PQGAAGQRGLA) are enriched in low complexity. A compositionally biased stretch (gly residues) spans 289–298 (GVKGDGGPKG). Low complexity-rich tracts occupy residues 326–345 (ATGP…RGMP), 355–398 (AAGP…AGPA), 436–449 (APGP…TGAT), and 461–473 (QGAA…QGLP). A compositionally biased stretch (gly residues) spans 474–483 (GPAGGAGEAG). The segment covering 508–518 (NPGAAGASGPQ) has biased composition (low complexity). Positions 531–568 (GTDGGKGEPGAAGAAGGPGHQGPGGMPGERGAAGGPGG) are enriched in gly residues. Residues 569–580 (KGEKGEAGHRGP) are compositionally biased toward basic and acidic residues. 2 stretches are compositionally biased toward low complexity: residues 611 to 625 (SGSF…ARGA) and 634 to 647 (PAGA…PGAD). Gly residues predominate over residues 657–666 (GPSGGKGESG). 3 stretches are compositionally biased toward low complexity: residues 667-692 (PSGP…TGAR), 703-730 (FPGA…PAGK), and 758-778 (SGEK…PLGL). Over residues 792-801 (GSPGGAGAVG) the composition is skewed to gly residues. Composition is skewed to low complexity over residues 802-824 (EAGR…LGLP) and 860-872 (PGSS…AGAP). The span at 876-897 (GPSGGAGRPGNRGESGPGGAAG) shows a compositional bias: gly residues. Over residues 898 to 913 (AVGPAGARGAAGPSGP) the composition is skewed to low complexity. Basic and acidic residues predominate over residues 914–928 (RGEKGVAGEKGERGM). 2 stretches are compositionally biased toward low complexity: residues 937–956 (LQGM…AGPN) and 986–997 (PGARGPPGYVGP). The segment covering 998–1010 (AGPPGXPGLPGPA) has biased composition (pro residues). Positions 1093–1127 (RTNKPSRLPLLDLAPLDLGGADQEFGLDLGPVCFK) constitute a Fibrillar collagen NC1 domain.

It belongs to the fibrillar collagen family.

It is found in the secreted. The protein localises to the extracellular space. Its subcellular location is the extracellular matrix. The polypeptide is Collagen alpha-2(I) chain (Epinephelus marginatus (Dusky grouper)).